Consider the following 312-residue polypeptide: Glyoxylate/hydroxypyruvate reductase A (312 aa).

The active site involves arginine 227. Histidine 275 functions as the Proton donor in the catalytic mechanism.

The protein belongs to the D-isomer specific 2-hydroxyacid dehydrogenase family. GhrA subfamily.

Its subcellular location is the cytoplasm. It carries out the reaction glycolate + NADP(+) = glyoxylate + NADPH + H(+). The catalysed reaction is (R)-glycerate + NAD(+) = 3-hydroxypyruvate + NADH + H(+). It catalyses the reaction (R)-glycerate + NADP(+) = 3-hydroxypyruvate + NADPH + H(+). Its function is as follows. Catalyzes the NADPH-dependent reduction of glyoxylate and hydroxypyruvate into glycolate and glycerate, respectively. This Escherichia coli O17:K52:H18 (strain UMN026 / ExPEC) protein is Glyoxylate/hydroxypyruvate reductase A.